We begin with the raw amino-acid sequence, 153 residues long: Small ribosomal subunit protein bS16 (153 aa).

Residues 121–131 are compositionally biased toward basic and acidic residues; the sequence is AEAAAKAKAEA. Positions 121 to 153 are disordered; that stretch reads AEAAAKAKAEAEAAAAAEEAPAEEAAEEAPAED. Positions 140-153 are enriched in acidic residues; that stretch reads APAEEAAEEAPAED.

This sequence belongs to the bacterial ribosomal protein bS16 family.

The chain is Small ribosomal subunit protein bS16 from Bifidobacterium longum (strain DJO10A).